Consider the following 103-residue polypeptide: PTS system oligo-beta-mannoside-specific EIIB component (103 aa).

A PTS EIIB type-3 domain is found at 1–103 (MKKILLACSS…EQALSLMVNQ (103 aa)). The Phosphocysteine intermediate role is filled by C8. At C8 the chain carries Phosphocysteine; by EIIA.

It localises to the cytoplasm. The catalysed reaction is D-cellobiose(out) + N(pros)-phospho-L-histidyl-[protein] = 6-phospho-beta-D-glucosyl-(1-&gt;4)-D-glucose(in) + L-histidyl-[protein]. The phosphoenolpyruvate-dependent sugar phosphotransferase system (sugar PTS), a major carbohydrate active transport system, catalyzes the phosphorylation of incoming sugar substrates concomitantly with their translocation across the cell membrane. The enzyme II GmuABC PTS system is involved in the transport of oligo-glucomannans such as cellobiose or mannobiose. The protein is PTS system oligo-beta-mannoside-specific EIIB component of Bacillus subtilis (strain 168).